The primary structure comprises 124 residues: Class I hydrophobin 1 (124 aa).

An N-terminal signal peptide occupies residues 1–18 (MRFSIATVVLSLAAMVVA). 4 disulfide bridges follow: C35–C85, C43–C79, C44–C63, and C86–C97.

Belongs to the fungal hydrophobin family.

Its subcellular location is the secreted. The protein resides in the cell wall. Functionally, aerial growth, conidiation, and dispersal of filamentous fungi in the environment rely upon a capability of their secreting small amphipathic proteins called hydrophobins (HPBs) with low sequence identity. Class I can self-assemble into an outermost layer of rodlet bundles on aerial cell surfaces, conferring cellular hydrophobicity that supports fungal growth, development and dispersal; whereas Class II form highly ordered films at water-air interfaces through intermolecular interactions but contribute nothing to the rodlet structure. In Botryotinia fuckeliana, hydrophobins are not involved in conferring surface hydrophobicity to conidia and aerial hyphae and their function in sclerotia and fruiting bodies remains to be investigated. In Botryotinia fuckeliana (strain B05.10) (Noble rot fungus), this protein is Class I hydrophobin 1 (Bhp1).